The following is a 123-amino-acid chain: Ribosome-binding factor A (123 aa).

This sequence belongs to the RbfA family. As to quaternary structure, monomer. Binds 30S ribosomal subunits, but not 50S ribosomal subunits or 70S ribosomes.

It localises to the cytoplasm. One of several proteins that assist in the late maturation steps of the functional core of the 30S ribosomal subunit. Associates with free 30S ribosomal subunits (but not with 30S subunits that are part of 70S ribosomes or polysomes). Required for efficient processing of 16S rRNA. May interact with the 5'-terminal helix region of 16S rRNA. The sequence is that of Ribosome-binding factor A from Delftia acidovorans (strain DSM 14801 / SPH-1).